The following is a 167-amino-acid chain: Putative 4-hydroxy-4-methyl-2-oxoglutarate aldolase (167 aa).

Substrate is bound by residues 81–84 (GDII) and Arg-103. A divalent metal cation is bound at residue Asp-104.

Belongs to the class II aldolase/RraA-like family. In terms of assembly, homotrimer. Requires a divalent metal cation as cofactor.

The catalysed reaction is 4-hydroxy-4-methyl-2-oxoglutarate = 2 pyruvate. It catalyses the reaction oxaloacetate + H(+) = pyruvate + CO2. Functionally, catalyzes the aldol cleavage of 4-hydroxy-4-methyl-2-oxoglutarate (HMG) into 2 molecules of pyruvate. Also contains a secondary oxaloacetate (OAA) decarboxylase activity due to the common pyruvate enolate transition state formed following C-C bond cleavage in the retro-aldol and decarboxylation reactions. In Corynebacterium jeikeium (strain K411), this protein is Putative 4-hydroxy-4-methyl-2-oxoglutarate aldolase.